The primary structure comprises 377 residues: tRNA-specific 2-thiouridylase MnmA (377 aa).

ATP is bound by residues 17–24 and methionine 43; that span reads GMSGGVDS. Residues 103 to 105 form an interaction with target base in tRNA region; it reads NPD. Residue cysteine 108 is the Nucleophile of the active site. Residues cysteine 108 and cysteine 204 are joined by a disulfide bond. Glycine 132 contributes to the ATP binding site. The interval 154-156 is interaction with tRNA; that stretch reads KDQ. The active-site Cysteine persulfide intermediate is cysteine 204. Positions 316–317 are interaction with tRNA; that stretch reads RY.

It belongs to the MnmA/TRMU family.

The protein localises to the cytoplasm. The catalysed reaction is S-sulfanyl-L-cysteinyl-[protein] + uridine(34) in tRNA + AH2 + ATP = 2-thiouridine(34) in tRNA + L-cysteinyl-[protein] + A + AMP + diphosphate + H(+). In terms of biological role, catalyzes the 2-thiolation of uridine at the wobble position (U34) of tRNA, leading to the formation of s(2)U34. The chain is tRNA-specific 2-thiouridylase MnmA from Pseudomonas fluorescens (strain ATCC BAA-477 / NRRL B-23932 / Pf-5).